A 761-amino-acid polypeptide reads, in one-letter code: Autophagy-related protein 13 (761 aa).

3 stretches are compositionally biased toward low complexity: residues 1–10 (MLSDFKQQQQ), 290–303 (SSSVSPLSSGTSLK), and 327–340 (STSPPVQSPSISQP). 6 disordered regions span residues 1-25 (MLSDFKQQQQQKHHSHNPPNSHDDT), 277-367 (FHKR…SNKS), 398-456 (ISGT…QSDL), 488-507 (DLRLGGGGGGGNSSVHNMSI), 544-642 (HSSR…SSIS), and 691-761 (YQNV…SRNF). Polar residues-rich tracts occupy residues 344–367 (PIQNQPSVPSSSLERRVSITSNKS) and 400–411 (GTSVPRSFSSST). Residues 429–444 (RFASSFGSRASRRYSS) are compositionally biased toward low complexity. Residues 445–456 (TSIRQQTPQSDL) show a composition bias toward polar residues. Residues 566–590 (QQQQQQQQNQQQSQSPHTNTTSSIH) are compositionally biased toward low complexity. The segment covering 600–613 (RMKDARPRSEDHQQ) has biased composition (basic and acidic residues). Residues 614–631 (TKFSAARRSSNISPTTAV) show a composition bias toward polar residues. Positions 632-642 (PSSIGTPSSIS) are enriched in low complexity. The span at 695–709 (FDDDDEDDNDEEEGD) shows a compositional bias: acidic residues. Residues 710 to 720 (REGNQLHEGRN) are compositionally biased toward basic and acidic residues. The span at 721 to 730 (STESSQNQSK) shows a compositional bias: polar residues.

This sequence belongs to the ATG13 family. Fungi subfamily. As to quaternary structure, interacts with ATG1 to form the ATG1-ATG13 kinase complex.

It is found in the cytoplasm. The protein localises to the preautophagosomal structure. In terms of biological role, plays a key role in autophagy. Activates the atg1 kinase in a nutritional condition dependent manner through the TOR pathway, leading to autophagy. Also involved in cytoplasm to vacuole transport (Cvt) and more specifically in Cvt vesicle formation. Seems to play a role in the switching machinery regulating the conversion between the Cvt pathway and autophagy. Finally, plays an important role in biofilm formation and resistance to antifungal compounds such as fluconazole, itraconazole, terbinafine and caspofungin. This Candida albicans (strain SC5314 / ATCC MYA-2876) (Yeast) protein is Autophagy-related protein 13.